The chain runs to 1112 residues: cGMP-inhibited 3',5'-cyclic phosphodiesterase 3B (1112 aa).

Basic and acidic residues predominate over residues 1–10 (MRRDERDAKA). Residues 1–25 (MRRDERDAKAMRSLQPPDGAGSPPE) form an interaction with RAPGEF3 region. The segment at 1–26 (MRRDERDAKAMRSLQPPDGAGSPPES) is disordered. Serine 13 is modified (phosphoserine). 6 consecutive transmembrane segments (helical) span residues 88 to 108 (FVLALLLGAEPESWAAGAAWL), 117 to 137 (HSLSPLFSIACAFFFLTCFLT), 152 to 172 (WWLLALPACCYLGDFLVWQWW), 192 to 212 (AAAGRLLLVLSCVGLLLTLAH), 220 to 240 (VLVLLLASFVWWVSFTSLGSL), and 247 to 267 (LLSGLVGGAGCLLALGLDHFF). Serine 295 bears the Phosphoserine; by PKB/AKT1 or PKB/AKT2 mark. A phosphoserine mark is found at serine 296 and serine 442. Residues 418–471 (EKGDRKLNKGLNRNSLPTPQLRRSSGTSGLLPVEQSSRWDRNNGKRPHQEFGIS) are disordered. Polar residues predominate over residues 428-445 (LNRNSLPTPQLRRSSGTS). The interval 436 to 460 (PQLRRSSGTSGLLPVEQSSRWDRNN) is interaction with PIK3R6. Over residues 454–466 (SRWDRNNGKRPHQ) the composition is skewed to basic and acidic residues. The region spanning 651–1079 (TNIEQEVSLD…KIWKEIVEEE (429 aa)) is the PDEase domain. Catalysis depends on histidine 737, which acts as the Proton donor. An AMP-binding site is contributed by histidine 737. Histidine 741, histidine 821, aspartate 822, and aspartate 937 together coordinate Mg(2+). Aspartate 822, aspartate 937, and glutamine 988 together coordinate AMP. Acidic residues-rich tracts occupy residues 1017–1041 (EEDNDTESGDDEDGEELDTEDEEME) and 1103–1112 (QVIEEADEEE). 2 disordered regions span residues 1017–1051 (EEDNDTESGDDEDGEELDTEDEEMENNLNPKPPRR) and 1092–1112 (ENSSLPQADEIQVIEEADEEE).

This sequence belongs to the cyclic nucleotide phosphodiesterase family. PDE3 subfamily. As to quaternary structure, homodimer. Interacts with PIK3CG; regulates PDE3B activity and thereby cAMP levels in cells. Interacts with RAPGEF3 and PIK3R6; form a signaling complex that regulates phosphatidylinositol 3-kinase gamma in angiogenesis. Interacts with ABHD15; this interaction regulates PDE3B's stability and expression and, thereby, impacts the antilipolytic action of insulin. Mg(2+) serves as cofactor. Mn(2+) is required as a cofactor. In terms of processing, phosphorylation at Ser-295 mediates insulin-induced activation of PDE3B. In terms of tissue distribution, abundant in adipose tissues.

The protein localises to the membrane. The enzyme catalyses a nucleoside 3',5'-cyclic phosphate + H2O = a nucleoside 5'-phosphate + H(+). It catalyses the reaction 3',5'-cyclic AMP + H2O = AMP + H(+). The catalysed reaction is 3',5'-cyclic GMP + H2O = GMP + H(+). With respect to regulation, inhibited by cGMP. In terms of biological role, cyclic nucleotide phosphodiesterase with a dual-specificity for the second messengers cAMP and cGMP, which are key regulators of many important physiological process. Regulates angiogenesis by inhibiting the cAMP-dependent guanine nucleotide exchange factor RAPGEF3 and downstream phosphatidylinositol 3-kinase gamma-mediated signaling. Controls cardiac contractility by reducing cAMP concentration in cardiocytes. The sequence is that of cGMP-inhibited 3',5'-cyclic phosphodiesterase 3B from Homo sapiens (Human).